A 77-amino-acid chain; its full sequence is Translation initiation factor IF-1, chloroplastic (77 aa).

Residues 1-71 (MKEQKWIHEG…SRGRIIYRLR (71 aa)) enclose the S1-like domain.

Belongs to the IF-1 family. In terms of assembly, component of the 30S ribosomal translation pre-initiation complex which assembles on the 30S ribosome in the order IF-2 and IF-3, IF-1 and N-formylmethionyl-tRNA(fMet); mRNA recruitment can occur at any time during PIC assembly.

The protein localises to the plastid. Its subcellular location is the chloroplast. Functionally, one of the essential components for the initiation of protein synthesis. Stabilizes the binding of IF-2 and IF-3 on the 30S subunit to which N-formylmethionyl-tRNA(fMet) subsequently binds. Helps modulate mRNA selection, yielding the 30S pre-initiation complex (PIC). Upon addition of the 50S ribosomal subunit IF-1, IF-2 and IF-3 are released leaving the mature 70S translation initiation complex. This chain is Translation initiation factor IF-1, chloroplastic, found in Buxus microphylla (Littleleaf boxwood).